The following is a 159-amino-acid chain: MTVAYIAIGSNLASPLEQVNAALKALGDIPESHILTVSSFYRTPPLGPQDQPDYLNAAVALETSLAPEELLNHTQRIELQQGRVRKAERWGPRTLDLDIMLFGNEVINTERLTVPHYDMKNRGFMLWPLFEIAPELVFPDGEMLRQILHTRAFDKLNKW.

Belongs to the HPPK family. Monomer.

The catalysed reaction is 6-hydroxymethyl-7,8-dihydropterin + ATP = (7,8-dihydropterin-6-yl)methyl diphosphate + AMP + H(+). It participates in cofactor biosynthesis; tetrahydrofolate biosynthesis; 2-amino-4-hydroxy-6-hydroxymethyl-7,8-dihydropteridine diphosphate from 7,8-dihydroneopterin triphosphate: step 4/4. Catalyzes the transfer of pyrophosphate from adenosine triphosphate (ATP) to 6-hydroxymethyl-7,8-dihydropterin, an enzymatic step in folate biosynthesis pathway. This chain is 2-amino-4-hydroxy-6-hydroxymethyldihydropteridine pyrophosphokinase (folK), found in Escherichia coli (strain K12).